Reading from the N-terminus, the 303-residue chain is Bifunctional protein FolD (303 aa).

NADP(+) is bound by residues 175–177 and Ile243; that span reads GVS.

Belongs to the tetrahydrofolate dehydrogenase/cyclohydrolase family. In terms of assembly, homodimer.

It catalyses the reaction (6R)-5,10-methylene-5,6,7,8-tetrahydrofolate + NADP(+) = (6R)-5,10-methenyltetrahydrofolate + NADPH. The catalysed reaction is (6R)-5,10-methenyltetrahydrofolate + H2O = (6R)-10-formyltetrahydrofolate + H(+). It participates in one-carbon metabolism; tetrahydrofolate interconversion. Catalyzes the oxidation of 5,10-methylenetetrahydrofolate to 5,10-methenyltetrahydrofolate and then the hydrolysis of 5,10-methenyltetrahydrofolate to 10-formyltetrahydrofolate. The protein is Bifunctional protein FolD of Xanthomonas oryzae pv. oryzae (strain PXO99A).